A 337-amino-acid polypeptide reads, in one-letter code: MENPRRVQILRAIVEDYVHSREPVGSKALVERHRLPVSSATVRNDMAALEEAGLIVAPHTSSGRIPTDRGYRVFVDQIAALQPLTGAQRRAIQVFLEGAHDLDDVMERTVRLLAQLTHQAAVIQYPVRAGITVRHVELVDVGAGTVLVILIPTSGRVAQRAVELAEPLDEVQLLELRARVLARVLGSTLETVPGRVAGLAEELPEALRHAGDRVSEALAVLAAASDEHRLVMAGTANLARFSGDFPQSISPVLEALEEQVTMLRLLSAMQQDERGVAVRIGSEECDDPLAEASVVATGYGPHAASKVGVVGPTRMDYPTTMAAVRAVARYLSRNLGD.

This sequence belongs to the HrcA family.

Its function is as follows. Negative regulator of class I heat shock genes (grpE-dnaK-dnaJ and groELS operons). Prevents heat-shock induction of these operons. The polypeptide is Heat-inducible transcription repressor HrcA (Kocuria rhizophila (strain ATCC 9341 / DSM 348 / NBRC 103217 / DC2201)).